A 404-amino-acid chain; its full sequence is Coenzyme F420H(2) oxidase (404 aa).

Fe cation-binding residues include His-84, Glu-86, Asp-88, His-89, His-152, Asp-170, and His-233. Positions 259–399 constitute a Flavodoxin-like domain; it reads VTVIYDTMHH…ACFEAGRRLA (141 aa). FMN-binding positions include 265-270, 317-320, and 351-356; these read TMHHST, AIYD, and SMGGRG.

This sequence in the N-terminal section; belongs to the zinc metallo-hydrolase group 3 family. FMN is required as a cofactor. Fe cation serves as cofactor.

The catalysed reaction is 2 reduced coenzyme F420-(gamma-L-Glu)(n) + O2 = 2 oxidized coenzyme F420-(gamma-L-Glu)(n) + 2 H2O + 2 H(+). Functionally, catalyzes the oxidation of F420H(2) with O(2). May be involved in O(2) detoxification, reducing the intracellular O(2) concentration to a level allowing growth at the expense of methane formation. The protein is Coenzyme F420H(2) oxidase of Methanothermobacter thermautotrophicus (strain ATCC 29096 / DSM 1053 / JCM 10044 / NBRC 100330 / Delta H) (Methanobacterium thermoautotrophicum).